The chain runs to 380 residues: MKNISLLGASGSIGTQTLDVLRSHPDQFRLVAFSAGKNIDYAVKVIQEFSPQIVSVQREEDVLKLQAVSGNTKVVYGSEGLLEVALHPDAEIVVNAVVGSVGLLPTLRAIEAKKTIGIANKETLVTAGHLVMEAARKHNVSLLPVDSEHSAIFQCLNGENEKRISRLIITASGGSFRDKTRDELHHVTVEDALRHPNWSMGSKITIDSATMMNKGLEVIEAHWLFGIPYEQIDVVLHKESIIHSMVEFEDRSVMAQLGSPDMRVPIQYALTYPDRLPLSDTKQLNLWEMGTLHFEKMNQERFRCLRFAYEAGKTGGSMPAVMNAANEVAVEAFLQKRIGFLTVEDLIEKAMNHHNVIARPSLEEILEIDAATRRFVMEQI.

8 residues coordinate NADPH: serine 10, glycine 11, serine 12, isoleucine 13, glycine 36, lysine 37, asparagine 38, and asparagine 120. 1-deoxy-D-xylulose 5-phosphate is bound at residue lysine 121. Residue glutamate 122 coordinates NADPH. Aspartate 146 contacts Mn(2+). 1-deoxy-D-xylulose 5-phosphate-binding residues include serine 147, glutamate 148, serine 172, and histidine 195. Mn(2+) is bound at residue glutamate 148. Glycine 201 lines the NADPH pocket. 1-deoxy-D-xylulose 5-phosphate-binding residues include serine 208, asparagine 213, lysine 214, and glutamate 217. Glutamate 217 is a Mn(2+) binding site.

It belongs to the DXR family. Mg(2+) is required as a cofactor. The cofactor is Mn(2+).

It carries out the reaction 2-C-methyl-D-erythritol 4-phosphate + NADP(+) = 1-deoxy-D-xylulose 5-phosphate + NADPH + H(+). The protein operates within isoprenoid biosynthesis; isopentenyl diphosphate biosynthesis via DXP pathway; isopentenyl diphosphate from 1-deoxy-D-xylulose 5-phosphate: step 1/6. Functionally, catalyzes the NADPH-dependent rearrangement and reduction of 1-deoxy-D-xylulose-5-phosphate (DXP) to 2-C-methyl-D-erythritol 4-phosphate (MEP). The chain is 1-deoxy-D-xylulose 5-phosphate reductoisomerase from Bacillus cereus (strain Q1).